Consider the following 158-residue polypeptide: MQSRLSDWLVKHELVHRSLGFDYQGIETLQIKTEDWDSIAVISYIYGYNYLRSQCAYDVAPGGFLASVYHLTRIQYGIDKVEEVCLKVFVSRNNPRIPSVFWIWKSADFQERESYDMLGISYANHPHLKRILMPESWIGWPLRKDYITPNFYEIQDAR.

This sequence belongs to the complex I 30 kDa subunit family. As to quaternary structure, NDH is composed of at least 16 different subunits, 5 of which are encoded in the nucleus.

Its subcellular location is the plastid. It localises to the chloroplast thylakoid membrane. The enzyme catalyses a plastoquinone + NADH + (n+1) H(+)(in) = a plastoquinol + NAD(+) + n H(+)(out). The catalysed reaction is a plastoquinone + NADPH + (n+1) H(+)(in) = a plastoquinol + NADP(+) + n H(+)(out). NDH shuttles electrons from NAD(P)H:plastoquinone, via FMN and iron-sulfur (Fe-S) centers, to quinones in the photosynthetic chain and possibly in a chloroplast respiratory chain. The immediate electron acceptor for the enzyme in this species is believed to be plastoquinone. Couples the redox reaction to proton translocation, and thus conserves the redox energy in a proton gradient. This chain is NAD(P)H-quinone oxidoreductase subunit J, chloroplastic, found in Dioscorea elephantipes (Elephant's foot yam).